The sequence spans 284 residues: 2-dehydro-3-deoxyphosphooctonate aldolase (284 aa).

The protein belongs to the KdsA family.

It localises to the cytoplasm. It catalyses the reaction D-arabinose 5-phosphate + phosphoenolpyruvate + H2O = 3-deoxy-alpha-D-manno-2-octulosonate-8-phosphate + phosphate. It functions in the pathway carbohydrate biosynthesis; 3-deoxy-D-manno-octulosonate biosynthesis; 3-deoxy-D-manno-octulosonate from D-ribulose 5-phosphate: step 2/3. Its pathway is bacterial outer membrane biogenesis; lipopolysaccharide biosynthesis. This chain is 2-dehydro-3-deoxyphosphooctonate aldolase, found in Haemophilus influenzae (strain PittEE).